A 95-amino-acid polypeptide reads, in one-letter code: Glycophorin-C (95 aa).

At 1–25 (MSSPVRTPPPERLEPNPGMSYAVME) the chain is on the extracellular side. A helical; Signal-anchor for type III membrane protein transmembrane segment spans residues 26 to 46 (IAIIAAVITAVALVLVCLLFL). At 47–95 (MLRYLYRHKGTYYTNEAKGTEFAESADAALQSDPALQDAGDTSKKEYFI) the chain is on the cytoplasmic side. Ser-71, Ser-78, and Ser-89 each carry phosphoserine.

Belongs to the glycophorin-C family.

The protein resides in the cell membrane. The chain is Glycophorin-C (Gypc) from Rattus norvegicus (Rat).